A 535-amino-acid polypeptide reads, in one-letter code: Dimethylaniline monooxygenase [N-oxide-forming] 2 (535 aa).

N-acetylalanine is present on A2. Residues 9–13 (GAGVS), E32, 40–41 (LW), and 61–62 (NT) contribute to the FAD site. Residues 60-61 (TN) and 195-198 (SASD) each bind NADP(+). A Glycyl lysine isopeptide (Lys-Gly) (interchain with G-Cter in SUMO) cross-link involves residue K492. The chain crosses the membrane as a helical span at residues 510–530 (LSASFLMKILALVAVFVAFFS).

It belongs to the FMO family. It depends on FAD as a cofactor. Mg(2+) serves as cofactor. In terms of tissue distribution, lung.

Its subcellular location is the microsome membrane. It localises to the endoplasmic reticulum membrane. Catalyzes the oxidative metabolism of numerous xenobiotics, including mainly therapeutic drugs and insecticides that contain a soft nucleophile, most commonly nitrogen and sulfur and participates to their bioactivation. In Cavia porcellus (Guinea pig), this protein is Dimethylaniline monooxygenase [N-oxide-forming] 2.